The primary structure comprises 209 residues: Protein GrpE (209 aa).

Basic and acidic residues-rich tracts occupy residues 1–16 (MKKS…KEES) and 34–44 (KAGEKTAEPEK). A disordered region spans residues 1-61 (MKKSTKKEST…EKSPEAACRE (61 aa)).

This sequence belongs to the GrpE family. In terms of assembly, homodimer.

Its subcellular location is the cytoplasm. Its function is as follows. Participates actively in the response to hyperosmotic and heat shock by preventing the aggregation of stress-denatured proteins, in association with DnaK and GrpE. It is the nucleotide exchange factor for DnaK and may function as a thermosensor. Unfolded proteins bind initially to DnaJ; upon interaction with the DnaJ-bound protein, DnaK hydrolyzes its bound ATP, resulting in the formation of a stable complex. GrpE releases ADP from DnaK; ATP binding to DnaK triggers the release of the substrate protein, thus completing the reaction cycle. Several rounds of ATP-dependent interactions between DnaJ, DnaK and GrpE are required for fully efficient folding. The protein is Protein GrpE of Methanosarcina acetivorans (strain ATCC 35395 / DSM 2834 / JCM 12185 / C2A).